The primary structure comprises 232 residues: MIDRKPFDKLGGADHGWLKAKHHFSFASYYDPNNMNWGALRVWNDDEIAPNTGFPPHPHSDMEIITYVRDGAITHQDNLGNKGRTVAGDVQVMSAGSGIRHAEYNLEPETTRIFQIWIEPKSFGGAPSWGSKPFPKGDRSGKFVTLASGFSDDADALPIRTDARVLGATLKAGETTTYALGKDRSGYLVPAAGVVEVNGVRLNARDGAGIKDEAVITITALEDAELVLVDAA.

It belongs to the pirin family.

In Caulobacter vibrioides (strain ATCC 19089 / CIP 103742 / CB 15) (Caulobacter crescentus), this protein is Pirin-like protein CC_1473.